A 313-amino-acid polypeptide reads, in one-letter code: Olfactory receptor 56A5 (313 aa).

Over 1-33 the chain is Extracellular; the sequence is MTLPSNNSTSPVFEFFLICFPSFQSWQHWLSLP. N-linked (GlcNAc...) asparagine glycans are attached at residues Asn-6 and Asn-7. The helical transmembrane segment at 34 to 54 threads the bilayer; the sequence is LSLLFLLAMGANATLLITIYL. The Cytoplasmic segment spans residues 55-67; that stretch reads EASLHQPLYYLLS. The helical transmembrane segment at 68 to 88 threads the bilayer; the sequence is LLSLLDIVLCLTVIPKVLAIF. At 89 to 100 the chain is on the extracellular side; the sequence is WFDLRSISFPAC. Cys-100 and Cys-182 are oxidised to a cystine. Residues 101-121 form a helical membrane-spanning segment; that stretch reads FLQVFIMNSFLTMESCTFMIM. At 122–146 the chain is on the cytoplasmic side; the sequence is AYDRYVAICKPLQYSSIITDQFVAR. A helical transmembrane segment spans residues 147 to 167; that stretch reads AAIFVVARNGLLTMPIPILSS. Topologically, residues 168–203 are extracellular; that stretch reads RLRYCAGHIIKNCICTNVSVSKLSCDDITLNQSYQF. Asn-184 and Asn-198 each carry an N-linked (GlcNAc...) asparagine glycan. Residues 204-224 form a helical membrane-spanning segment; it reads VIGWTLLGSDLILIVLSYFFI. The Cytoplasmic segment spans residues 225–246; sequence LKTVLRIKGEGDMAKALGTCGS. The chain crosses the membrane as a helical span at residues 247 to 267; the sequence is HFILILFFTTVLLVLVITNLA. The Extracellular portion of the chain corresponds to 268–276; sequence RKRIPPDVP. The chain crosses the membrane as a helical span at residues 277–297; that stretch reads ILLNILHHLIPPALNPIVYGV. Residues 298 to 313 lie on the Cytoplasmic side of the membrane; sequence RTKEIKQGIQNLLRRL.

The protein belongs to the G-protein coupled receptor 1 family.

Its subcellular location is the cell membrane. Functionally, odorant receptor. The chain is Olfactory receptor 56A5 (OR56A5) from Homo sapiens (Human).